Here is a 386-residue protein sequence, read N- to C-terminus: MATTKSFLILFFMILATTSSTCAKLEEMVTVLSIDGGGIKGIIPAIILEFLEGQLQEVDNNKDARLADYFDVIGGTSTGGLLTAMITTPNENNRPFAAAKDIVPFYFEHGPHIFNYSGSIIGPMYDGKYLLQVLQEKLGETRVHQALTEVAISSFDIKTNKPVIFTKSNLAKSPELDAKMYDICYSTAAAPIYFPPHYFITHTSNGDIYEFNLVDGGVATVGDPALLSLSVATRLAQEDPAFSSIKSLDYKQMLLLSLGTGTNSEFDKTYTAQEAAKWGPLRWMLAIQQMTNAASSYMTDYYISTVFQARHSQNNYLRVQENALTGTTTEMDDASEANMELLVQVGETLLKKPVSKDSPETYEEALKRFAKLLSDRKKLRASKASY.

An N-terminal signal peptide occupies residues 1 to 23; it reads MATTKSFLILFFMILATTSSTCA. Positions 32-229 constitute a PNPLA domain; it reads LSIDGGGIKG…TVGDPALLSL (198 aa). A GXGXXG motif is present at residues 36-41; the sequence is GGGIKG. The short motif at 75 to 79 is the GXSXG element; it reads GTSTG. Serine 77 (nucleophile) is an active-site residue. Asparagine 115 carries N-linked (GlcNAc...) asparagine glycosylation. The Proton acceptor role is filled by aspartate 215. The DGA/G signature appears at 215–217; it reads DGG. The stretch at 321 to 381 forms a coiled coil; that stretch reads ENALTGTTTE…LLSDRKKLRA (61 aa).

The protein belongs to the patatin family. As to expression, tuber.

The protein resides in the vacuole. In terms of biological role, probable lipolytic acyl hydrolase (LAH), an activity which is thought to be involved in the response of tubers to pathogens. The polypeptide is Patatin-14 (Solanum tuberosum (Potato)).